Consider the following 69-residue polypeptide: Conotoxin Cal12.1p5 (69 aa).

A propeptide spanning residues 1 to 23 (DLITNSYTRGKPRHVTSWRNLKT) is cleaved from the precursor.

Post-translationally, contains 4 disulfide bonds. As to expression, expressed by the venom duct.

It localises to the secreted. The polypeptide is Conotoxin Cal12.1p5 (Californiconus californicus (California cone)).